The following is a 345-amino-acid chain: tRNA-specific 2-thiouridylase MnmA (345 aa).

ATP contacts are provided by residues 6-13 (AMSGGVDS) and leucine 32. Cysteine 100 acts as the Nucleophile in catalysis. Cysteines 100 and 197 form a disulfide. Glycine 124 contributes to the ATP binding site. An interaction with tRNA region spans residues 146–148 (RDQ). Catalysis depends on cysteine 197, which acts as the Cysteine persulfide intermediate.

The protein belongs to the MnmA/TRMU family.

The protein resides in the cytoplasm. The catalysed reaction is S-sulfanyl-L-cysteinyl-[protein] + uridine(34) in tRNA + AH2 + ATP = 2-thiouridine(34) in tRNA + L-cysteinyl-[protein] + A + AMP + diphosphate + H(+). Catalyzes the 2-thiolation of uridine at the wobble position (U34) of tRNA, leading to the formation of s(2)U34. The sequence is that of tRNA-specific 2-thiouridylase MnmA from Acidiphilium cryptum (strain JF-5).